The chain runs to 640 residues: Probable threonine--tRNA ligase, cytoplasmic (640 aa).

A TGS domain is found at 1-63 (MYEVKLKVEL…LKDCKLELMT (63 aa)).

It belongs to the class-II aminoacyl-tRNA synthetase family.

The protein resides in the cytoplasm. It carries out the reaction tRNA(Thr) + L-threonine + ATP = L-threonyl-tRNA(Thr) + AMP + diphosphate + H(+). This chain is Probable threonine--tRNA ligase, cytoplasmic, found in Encephalitozoon cuniculi (strain GB-M1) (Microsporidian parasite).